The sequence spans 504 residues: Arabinose import ATP-binding protein AraG (504 aa).

2 consecutive ABC transporter domains span residues 8 to 243 (LSFR…MVGR) and 256 to 499 (YGEE…MPKV). 40–47 (GENGAGKS) is an ATP binding site.

It belongs to the ABC transporter superfamily. Arabinose importer (TC 3.A.1.2.2) family. The complex is composed of two ATP-binding proteins (AraG), two transmembrane proteins (AraH) and a solute-binding protein (AraF).

The protein resides in the cell inner membrane. It carries out the reaction L-arabinose(out) + ATP + H2O = L-arabinose(in) + ADP + phosphate + H(+). Its function is as follows. Part of the ABC transporter complex AraFGH involved in arabinose import. Responsible for energy coupling to the transport system. In Shigella dysenteriae serotype 1 (strain Sd197), this protein is Arabinose import ATP-binding protein AraG.